Consider the following 487-residue polypeptide: 2-succinylbenzoate--CoA ligase (487 aa).

Belongs to the ATP-dependent AMP-binding enzyme family. MenE subfamily.

The catalysed reaction is 2-succinylbenzoate + ATP + CoA = 2-succinylbenzoyl-CoA + AMP + diphosphate. It functions in the pathway quinol/quinone metabolism; 1,4-dihydroxy-2-naphthoate biosynthesis; 1,4-dihydroxy-2-naphthoate from chorismate: step 5/7. The protein operates within quinol/quinone metabolism; menaquinone biosynthesis. Functionally, converts 2-succinylbenzoate (OSB) to 2-succinylbenzoyl-CoA (OSB-CoA). The protein is 2-succinylbenzoate--CoA ligase of Bacillus velezensis (strain DSM 23117 / BGSC 10A6 / LMG 26770 / FZB42) (Bacillus amyloliquefaciens subsp. plantarum).